A 199-amino-acid chain; its full sequence is Small ribosomal subunit protein mS38 (199 aa).

Belongs to the mitochondrion-specific ribosomal protein mS38 family. In terms of assembly, component of the mitochondrial small ribosomal subunit (mt-SSU). Mature mammalian 55S mitochondrial ribosomes consist of a small (28S) and a large (39S) subunit. The 28S small subunit contains a 12S ribosomal RNA (12S mt-rRNA) and 30 different proteins. The 39S large subunit contains a 16S rRNA (16S mt-rRNA), a copy of mitochondrial valine transfer RNA (mt-tRNA(Val)), which plays an integral structural role, and 52 different proteins. Interacts with Aurora-A. As to expression, ubiquitously expressed and especially highly expressed in heart, skeletal muscle and testis.

Its subcellular location is the mitochondrion matrix. The protein resides in the nucleus. Its function is as follows. May act as a negative regulator of Aurora-A kinase, by down-regulation through proteasome-dependent degradation. The polypeptide is Small ribosomal subunit protein mS38 (AURKAIP1) (Homo sapiens (Human)).